Consider the following 525-residue polypeptide: Apolipoprotein N-acyltransferase 2 (525 aa).

The next 6 membrane-spanning stretches (helical) occupy residues Ile25–Leu45, Phe56–Phe76, Ile81–Leu101, Phe115–Tyr135, Phe153–Leu173, and Leu200–Ile220. The region spanning Leu228–Val486 is the CN hydrolase domain. The active-site Proton acceptor is the Glu274. Residue Lys339 is part of the active site. Cys397 acts as the Nucleophile in catalysis. Residues Ala495–Leu515 form a helical membrane-spanning segment.

Belongs to the CN hydrolase family. Apolipoprotein N-acyltransferase subfamily.

Its subcellular location is the cell inner membrane. It catalyses the reaction N-terminal S-1,2-diacyl-sn-glyceryl-L-cysteinyl-[lipoprotein] + a glycerophospholipid = N-acyl-S-1,2-diacyl-sn-glyceryl-L-cysteinyl-[lipoprotein] + a 2-acyl-sn-glycero-3-phospholipid + H(+). Its pathway is protein modification; lipoprotein biosynthesis (N-acyl transfer). Its function is as follows. Catalyzes the phospholipid dependent N-acylation of the N-terminal cysteine of apolipoprotein, the last step in lipoprotein maturation. This is Apolipoprotein N-acyltransferase 2 from Treponema denticola (strain ATCC 35405 / DSM 14222 / CIP 103919 / JCM 8153 / KCTC 15104).